Reading from the N-terminus, the 932-residue chain is AP-3 complex subunit delta (932 aa).

At Thr2 the chain carries N-acetylthreonine. HEAT repeat units lie at residues 157–194, 196–231, 233–269, 270–307, 310–346, 347–384, 386–425, 427–466, 490–527, 528–564, 570–601, and 602–638; these read SLAR…QYPE, LRDN…KNPQ, FIQL…VEPK, LRAK…LEED, ETAM…KINT, DFIS…EDNL, AIVQ…ENYK, KMVN…DISD, VTIA…TLVE, NGND…NWCN, KRFE…ERSV, and EVLE…AYEL. Phosphoserine occurs at positions 700 and 727. The segment at 720-868 is disordered; that stretch reads EREKERMSNP…EEGNLRKEDE (149 aa). Composition is skewed to basic and acidic residues over residues 738-747 and 755-766; these read ERTKNSKDLL and SDKKPETIRLNR. Thr767 is subject to Phosphothreonine. Low complexity predominate over residues 767 to 779; it reads TDNSLNSLSLSTT. Residues Ser770 and Ser773 each carry the phosphoserine modification. Residues 783–793 show a composition bias toward basic residues; it reads RKKKKGKKKNR. A Phosphoserine modification is found at Ser798. The segment covering 806-832 has biased composition (basic and acidic residues); sequence APKRKDAFQKPHDNHSTQNPLKKDKIN. Residues 838-855 are compositionally biased toward polar residues; it reads QLENFDFSNFGQSSNAGR. Over residues 857 to 868 the composition is skewed to basic and acidic residues; it reads SQEEGNLRKEDE. A coiled-coil region spans residues 858–878; sequence QEEGNLRKEDELELSRLEANL. A Phosphoserine modification is found at Ser888. Over residues 897–915 the composition is skewed to basic residues; the sequence is KKKKKGKKSKSKNKLKTKA. A disordered region spans residues 897-932; it reads KKKKKGKKSKSKNKLKTKAKNSPEPNEFLRDQSTDI. Position 918 is a phosphoserine (Ser918). The segment covering 923–932 has biased composition (basic and acidic residues); the sequence is EFLRDQSTDI.

It belongs to the adaptor complexes large subunit family. As to quaternary structure, adaptor protein complex 3 (AP-3) is a heterotetramer composed of 2 large adaptins (APL5 and APL6), a medium adaptin (APM3) and a small adaptin (APS3). Interacts with VPS41.

It is found in the golgi apparatus. The protein localises to the cytoplasmic vesicle. It localises to the clathrin-coated vesicle membrane. Functionally, part of the AP-3 complex, an adaptor-related complex which is not clathrin-associated. The complex is associated with the Golgi region as well as more peripheral structures. It facilitates the budding of vesicles from the Golgi membrane and may be directly involved in trafficking to the vacuole. Required for the transport via the ALP pathway, which directs the transport of the cargo proteins PHO8 and VAM3 to the vacuole. The chain is AP-3 complex subunit delta (APL5) from Saccharomyces cerevisiae (strain ATCC 204508 / S288c) (Baker's yeast).